The sequence spans 328 residues: 4-hydroxythreonine-4-phosphate dehydrogenase (328 aa).

The substrate site is built by histidine 130 and threonine 131. A divalent metal cation is bound by residues histidine 163, histidine 208, and histidine 263. Positions 271, 280, and 289 each coordinate substrate.

It belongs to the PdxA family. As to quaternary structure, homodimer. Requires Zn(2+) as cofactor. The cofactor is Mg(2+). It depends on Co(2+) as a cofactor.

Its subcellular location is the cytoplasm. It catalyses the reaction 4-(phosphooxy)-L-threonine + NAD(+) = 3-amino-2-oxopropyl phosphate + CO2 + NADH. It participates in cofactor biosynthesis; pyridoxine 5'-phosphate biosynthesis; pyridoxine 5'-phosphate from D-erythrose 4-phosphate: step 4/5. Functionally, catalyzes the NAD(P)-dependent oxidation of 4-(phosphooxy)-L-threonine (HTP) into 2-amino-3-oxo-4-(phosphooxy)butyric acid which spontaneously decarboxylates to form 3-amino-2-oxopropyl phosphate (AHAP). The sequence is that of 4-hydroxythreonine-4-phosphate dehydrogenase from Burkholderia vietnamiensis (strain G4 / LMG 22486) (Burkholderia cepacia (strain R1808)).